A 955-amino-acid polypeptide reads, in one-letter code: Valine--tRNA ligase (955 aa).

The 'HIGH' region signature appears at 41-51 (PNITGSLHMGH). Positions 554–558 (KMSKS) match the 'KMSKS' region motif. Lys557 is an ATP binding site. A coiled-coil region spans residues 926–946 (QEKNKLLKLNEINLKLSEQIK).

It belongs to the class-I aminoacyl-tRNA synthetase family. ValS type 1 subfamily. Monomer.

Its subcellular location is the cytoplasm. It catalyses the reaction tRNA(Val) + L-valine + ATP = L-valyl-tRNA(Val) + AMP + diphosphate. Its function is as follows. Catalyzes the attachment of valine to tRNA(Val). As ValRS can inadvertently accommodate and process structurally similar amino acids such as threonine, to avoid such errors, it has a 'posttransfer' editing activity that hydrolyzes mischarged Thr-tRNA(Val) in a tRNA-dependent manner. This is Valine--tRNA ligase from Buchnera aphidicola subsp. Acyrthosiphon pisum (strain APS) (Acyrthosiphon pisum symbiotic bacterium).